The following is a 591-amino-acid chain: ATPase family AAA domain-containing protein 3A (591 aa).

Positions 1–52 are disordered; the sequence is MSWLFGIKGPKGEGTGPPLPLPPAQPGAESGGDRGAGDRPSPKDKWSNFDPT. Position 2 is an N-acetylserine (Ser-2). A required for interaction with the inner surface of the mitochondrial outer membrane region spans residues 2 to 49; the sequence is SWLFGIKGPKGEGTGPPLPLPPAQPGAESGGDRGAGDRPSPKDKWSNF. Topologically, residues 2-245 are mitochondrial intermembrane; the sequence is SWLFGIKGPK…FRAFVTDWDK (244 aa). Positions 31 to 47 are enriched in basic and acidic residues; sequence GGDRGAGDRPSPKDKWS. The stretch at 55–216 forms a coiled coil; that stretch reads ERAAKAAREL…REQIRLKAAE (162 aa). The helical transmembrane segment at 246–263 threads the bilayer; sequence VTATVAGLTLLAVGVYSA. Over 264 to 591 the chain is Mitochondrial matrix; the sequence is KNATSVAGRY…KPPHPSLLSC (328 aa). The tract at residues 289-304 is S100B-binding; sequence RISVLEALRHPIQVSR. 351 to 358 contributes to the ATP binding site; the sequence is GPPGTGKT. Lys-490 bears the N6-acetyllysine; alternate mark. Residue Lys-490 is modified to N6-succinyllysine; alternate. An N6-acetyllysine mark is found at Lys-494 and Lys-512.

Belongs to the AAA ATPase family. Can form homooligomers. Homodimer formation at the N-terminus may be regulated by ATP and is required for the interaction with the inner surface of the mitochondrial outer membrane and correct mitochondrial homeostasis. Interacts with components of the mitochondrial ribosome and with other proteins involved in mitochondrial RNA metabolism. May also interact with protein involved in lipid metabolism, including STARD9. May interact with FAM210A. Interacts with GADD45GIP1. Interacts with S100B in a Ca(+2)- and Zn(+2)-dependent manner; this interaction probably occurs in the cytosol prior to mitochondrial targeting. S100B could assist ATAD3A cytoplasmic processing, preventing aggregation and favoring mitochondrial localization. Interacts with HSP60/HSPD1. Interacts with CLPB. Interacts with EIF2AK3/PERK; ATAD3A and EIF2S1/eIF-2-alpha occupy a common binding site within the cytoplasmic loop of EIF2AK3/PERK, leading to prevent EIF2AK3/PERK association with its substrate EIF2S1/eIF-2-alpha.

It is found in the mitochondrion inner membrane. Its subcellular location is the mitochondrion matrix. The protein localises to the mitochondrion nucleoid. It carries out the reaction ATP + H2O = ADP + phosphate + H(+). Functionally, essential for mitochondrial network organization, mitochondrial metabolism and cell growth at organism and cellular level. May play an important role in mitochondrial protein synthesis. May also participate in mitochondrial DNA replication. May bind to mitochondrial DNA D-loops and contribute to nucleoid stability. Required for enhanced channeling of cholesterol for hormone-dependent steroidogenesis. Involved in mitochondrial-mediated antiviral innate immunity. Required to protect mitochondria from the PERK-mediated unfolded protein response: specifically inhibits the activity of EIF2AK3/PERK at mitochondria-endoplasmic reticulum contact sites, thereby providing a safe haven for mitochondrial protein translation during endoplasmic reticulum stress. Ability to inhibit EIF2AK3/PERK is independent of its ATPase activity. Also involved in the mitochondrial DNA damage response by promoting signaling between damaged genomes and the mitochondrial membrane, leading to activation of the integrated stress response (ISR). The protein is ATPase family AAA domain-containing protein 3A (Atad3a) of Rattus norvegicus (Rat).